The sequence spans 311 residues: MSEERELLRETVAALVEKHASPEAVRAAMESELGYDPNLWRLLCEQVGAAALVIPEEFGGAGGELADAAVVLEELGKALVPTPLLGTTLAEIALLSVGRTEPLEELAEGAKIGTVVFNPEFVINGDIADIMIAADGETLTQWDTFTAQPKPTMDMTRRLASVIPGATTTLGDDQGLADTAALLMAAEQIGAASRCLDLTVAYSKDRVQFGRPIGSFQALKHRMADLYVKVASARAVVHDSIATPSSTSAALARYFASEALSAVTSEAVQIHGGIAITWEHDIQLYFKRAHGSAQLLGPPREQLRRLEAEVF.

Residues arginine 206 and glycine 273 each coordinate FAD.

This sequence belongs to the acyl-CoA dehydrogenase family. As to quaternary structure, heterotetramer composed of 2 IpdE1 subunits and 2 IpdE2 subunits. Requires FAD as cofactor.

It catalyses the reaction 3-[(3aS,4S,5R,7aS)-5-hydroxy-7a-methyl-1-oxo-octahydro-1H-inden-4-yl]propanoyl-CoA + A = (2E)-3-[(3aS,4S,5R,7aS)-5-hydroxy-7a-methyl-1-oxo-octahydro-1H-inden-4-yl]prop-2-enoyl-CoA + AH2. The protein operates within steroid metabolism; cholesterol degradation. Its function is as follows. Involved in cholesterol degradation. Catalyzes the dehydrogenation of 5OH-HIP-CoA to 5OH-HIPE-CoA. In Mycolicibacterium smegmatis (strain ATCC 700084 / mc(2)155) (Mycobacterium smegmatis), this protein is Acyl-CoA dehydrogenase IpdE2.